A 374-amino-acid chain; its full sequence is MAANDRAAAPGKSGGSAGADGLMRASLSAVAPGTSLRDGLERVLRGNTGGLIVLGSDKTVESMCTGGFVLDVEFTATRLRELCKLDGGIVLSSDLSKILRAGVQLLPDPTIPTEETGTRHRTADRVSKQVGFPVVSVSQSMRLIALYVDGQRRVLEDSAAILSRANQALATLERYKLRLDEVAGTLSALEIEDLVTVRDVSAVAQRLEMVRRIATEIAEYVVELGTDGRLLALQLDELIAGVEPERELVVRDYVPEPTAKRSRTVDEALAELDKLSHAELLELSTVARALGYTGSPETLDSAVSPRGFRLLAKVPRLPGAIIDRLVEHFGGLQKLLAASVDDLQTVDGVGEARARSVREGLSRLAESSILERYV.

The 139-residue stretch at 20–158 (DGLMRASLSA…DGQRRVLEDS (139 aa)) folds into the DAC domain. ATP-binding positions include G87, L105, and 118–122 (TRHRT).

It belongs to the DisA family. Homooctamer. Interacts with RadA. Requires Mg(2+) as cofactor.

The catalysed reaction is 2 ATP = 3',3'-c-di-AMP + 2 diphosphate. Its activity is regulated as follows. Diadenylate cyclase activity is inhibited by the interaction with RadA. Participates in a DNA-damage check-point that is active prior to asymmetric division when DNA is damaged. DisA forms globular foci that rapidly scan along the chromosomes during sporulation, searching for lesions. When a lesion is present, DisA pauses at the lesion site. This triggers a cellular response that culminates in a temporary block in sporulation initiation. In terms of biological role, also has diadenylate cyclase activity, catalyzing the condensation of 2 ATP molecules into cyclic di-AMP (c-di-AMP). c-di-AMP acts as a signaling molecule that couples DNA integrity with progression of sporulation. The rise in c-di-AMP level generated by DisA while scanning the chromosome, operates as a positive signal that advances sporulation; upon encountering a lesion, the DisA focus arrests at the damaged site and halts c-di-AMP synthesis. This is DNA integrity scanning protein DisA from Streptomyces coelicolor (strain ATCC BAA-471 / A3(2) / M145).